Consider the following 497-residue polypeptide: Di-/tripeptide transporter (497 aa).

At 1-36 (MQNLNKTEKTFFGQPRGLLTLFQTEFWERFSYYGMR) the chain is on the cytoplasmic side. The chain crosses the membrane as a helical span at residues 37-55 (AILVYYLYALTTADNAGLG). Over 56-64 (LPKAQAMAI) the chain is Extracellular. Residues 65-83 (VSIYGALVYLSTIVGGWVA) traverse the membrane as a helical segment. At 84–92 (DRLLGASRT) the chain is on the cytoplasmic side. Residues 93–111 (IFLGGILITLGHIALATPF) form a helical membrane-spanning segment. Topologically, residues 112-115 (GLSS) are extracellular. The helical transmembrane segment at 116–134 (LFVALFLIILGTGMLKPNI) threads the bilayer. Residues 135 to 154 (SNMVGHLYSKDDSRRDTGFN) lie on the Cytoplasmic side of the membrane. Residues 155 to 173 (IFVVGINMGSLIAPLIVGT) traverse the membrane as a helical segment. The Extracellular segment spans residues 174-181 (VGQGVNYH). Residues 182–200 (LGFSLAAIGMIFALFAYWY) traverse the membrane as a helical segment. The Cytoplasmic segment spans residues 201–224 (GRLRHFPEIGREPSNPMDSKARRN). The helical transmembrane segment at 225 to 243 (FLITLTIVVIVAIIGFFLL) threads the bilayer. Topologically, residues 244 to 254 (YQASPANFINN) are extracellular. Residues 255 to 273 (FINVLSIIGIVVPIIYFVM) form a helical membrane-spanning segment. The Cytoplasmic segment spans residues 274-293 (MFTSKKVESDERRKLTAYIP). A helical transmembrane segment spans residues 294–312 (LFLSAIVFWAIEEQSSTII). Over 313–335 (AVWGESRSNLDPTWFGITFHIDP) the chain is Extracellular. Residues 336–354 (SWYQLLNPLFIVLLSPIFV) traverse the membrane as a helical segment. Residues 355–372 (RLWNKLGERQPSTIVKFG) are Cytoplasmic-facing. The helical transmembrane segment at 373 to 391 (LGLMLTGISYLIMTLPGLL) threads the bilayer. Topologically, residues 392 to 425 (NGTSGRASALWLVLMFAVQMAGELLVSPVGLSVS) are extracellular. A helical membrane pass occupies residues 426–444 (TKLAPVAFQSQMMAMWFLA). At 445–497 (DSTSQAINAQITPLFKAATEVHFFAITGIIGIIVGIILLIVKKPILKLMGDVR) the chain is on the cytoplasmic side.

This sequence belongs to the major facilitator superfamily. Proton-dependent oligopeptide transporter (POT/PTR) (TC 2.A.17) family.

Its subcellular location is the cell membrane. Proton-dependent uptake of di- or tri-peptides. The protein is Di-/tripeptide transporter (dtpT) of Lactococcus lactis subsp. lactis (strain IL1403) (Streptococcus lactis).